A 502-amino-acid polypeptide reads, in one-letter code: Sodium/proline symporter (502 aa).

The Periplasmic portion of the chain corresponds to 1–5 (MAIST). The chain crosses the membrane as a helical span at residues 6 to 26 (PMLVTFCVYIFGMILIGFIAW). At 27-41 (RSTKNFDDYILGGRS) the chain is on the cytoplasmic side. Hydrophilic stretches follow at residues 27–66 (RSTKNFDDYILGGRSLGPFVTALSAGASDMSGWLLMGLPG) and 88–124 (INWKLVAGRLRVHTEYNNNALTLPDYFTGRFEDKSRI). The helical transmembrane segment at 42–62 (LGPFVTALSAGASDMSGWLLM) threads the bilayer. The Periplasmic segment spans residues 63–67 (GLPGA). A helical membrane pass occupies residues 68–88 (VFLSGISESWIAIGLTLGAWI). Topologically, residues 89-126 (NWKLVAGRLRVHTEYNNNALTLPDYFTGRFEDKSRILR) are cytoplasmic. Residues 127–147 (IISALVILLFFTIYCASGIVA) traverse the membrane as a helical segment. Over 148–162 (GARLFESTFGMSYET) the chain is Periplasmic. Residues 151–162 (LFESTFGMSYET) form a hydrophilic region. Residues 163-183 (ALWAGAAATILYTFIGGFLAV) traverse the membrane as a helical segment. At 184-192 (SWTDTVQAS) the chain is on the cytoplasmic side. Positions 185-189 (WTDTV) are hydrophilic. Residues 193 to 213 (LMIFALILTPVIVIISVGGFG) form a helical membrane-spanning segment. 3 hydrophilic regions span residues 214 to 231 (DSLEVIKQKSIENVDMLK), 249 to 274 (FGQPHILARFMAADSHHSIVHARRIS), and 296 to 319 (FNDHPALAGAVNQNAERVFIELAQ). Topologically, residues 214–234 (DSLEVIKQKSIENVDMLKGLN) are periplasmic. Residues 235–255 (FVAIISLMGWGLGYFGQPHIL) traverse the membrane as a helical segment. Residues 256–275 (ARFMAADSHHSIVHARRISM) are Cytoplasmic-facing. Residues 276–296 (TWMILCLAGAVAVGFFGIAYF) traverse the membrane as a helical segment. The Periplasmic portion of the chain corresponds to 297-319 (NDHPALAGAVNQNAERVFIELAQ). Residues 320-340 (ILFNPWIAGILLSAILAAVMS) form a helical membrane-spanning segment. The Cytoplasmic segment spans residues 341–370 (TLSCQLLVCSSAITEDLYKAFLRKHASQKE). A hydrophilic region spans residues 341-370 (TLSCQLLVCSSAITEDLYKAFLRKHASQKE). A helical transmembrane segment spans residues 371-391 (LVWVGRVMVLVVALVAIALAA). Over 392–397 (NPENRV) the chain is Periplasmic. Residues 392 to 397 (NPENRV) form a hydrophilic region. Residues 398–418 (LGLVSYAWAGFGAAFGPVVLF) traverse the membrane as a helical segment. At 419 to 427 (SVMWSRMTR) the chain is on the cytoplasmic side. Hydrophilic regions lie at residues 424-430 (RMTRNGA) and 446-448 (QFG). 2 helical membrane passes run 428–448 (NGALAGMIIGALTVIVWKQFG) and 449–469 (WLGLYEIIPGFIFGSIGIVVF). The Cytoplasmic portion of the chain corresponds to 470 to 502 (SLLGKAPSAAMQKRFAEADAHYHSAPPSRLQES). The interval 476-502 (PSAAMQKRFAEADAHYHSAPPSRLQES) is hydrophilic.

This sequence belongs to the sodium:solute symporter (SSF) (TC 2.A.21) family. As to quaternary structure, has been isolated from inner membrane preparations as a homodimer.

It localises to the cell inner membrane. It carries out the reaction L-proline(in) + Na(+)(in) = L-proline(out) + Na(+)(out). Activity is stimulated by phosphatidylethanolamine and phosphatidylglycerol, but not by phosphatidylcholine and cardiolipin. Proline uptake is inhibited by the sulfhydryl reagent N-ethylmaleimide (NEM). Proline, in the presence of Na(+) or Li(+), protects the carrier functions from NEM-inactivation. Its function is as follows. Catalyzes the sodium-dependent uptake of extracellular L-proline. This protein is also capable of using lithium as the transport cation. Also catalyzes the uptake of propionate. The polypeptide is Sodium/proline symporter (putP) (Escherichia coli (strain K12)).